The primary structure comprises 449 residues: Glucose-6-phosphate isomerase (449 aa).

The active-site Proton donor is the Glu-291. Catalysis depends on residues His-312 and Lys-426.

The protein belongs to the GPI family.

It is found in the cytoplasm. It carries out the reaction alpha-D-glucose 6-phosphate = beta-D-fructose 6-phosphate. Its pathway is carbohydrate biosynthesis; gluconeogenesis. It functions in the pathway carbohydrate degradation; glycolysis; D-glyceraldehyde 3-phosphate and glycerone phosphate from D-glucose: step 2/4. Its function is as follows. Catalyzes the reversible isomerization of glucose-6-phosphate to fructose-6-phosphate. The protein is Glucose-6-phosphate isomerase of Streptococcus pyogenes serotype M18 (strain MGAS8232).